Reading from the N-terminus, the 855-residue chain is Envelope glycoprotein gp150 (855 aa).

Topologically, residues 1-784 (MAEGGFTHNQ…WIGKIPQYLK (784 aa)) are extracellular. 20 N-linked (GlcNAc...) asparagine; by host glycosylation sites follow: N135, N220, N258, N269, N274, N298, N330, N336, N342, N372, N418, N422, N448, N469, N481, N499, N518, N531, N548, and N551. A fusion peptide region spans residues 615–635 (IMLALATVLSMAGAGTGATAI). Positions 642-692 (HQVLATHQQALEKITEALKINNLRLITLEHQVLVIGLRVEAIEKFLYTAFA) form a coiled coil. Residues 661–679 (INNLRLITLEHQVLVIGLR) are immunosuppression. 4 N-linked (GlcNAc...) asparagine; by host glycosylation sites follow: N716, N720, N728, and N736. The stretch at 735-771 (YNQTRDLQNKFYEIIMDIEQNNVQGKTGIQQLQKWEN) forms a coiled coil. A helical membrane pass occupies residues 785-805 (GLLGSVLGIGLGILLLLICLP). Over 806–855 (TLVDCIRNCTNKILGYTVIAMPEIDDEEVHLSVELRRNGRQCGISEKEEE) the chain is Cytoplasmic.

In terms of assembly, the mature envelope protein (Env) consists of a trimer of SU-TM heterodimers attached by noncovalent interactions or by a labile interchain disulfide bond. Post-translationally, specific enzymatic cleavages in vivo yield mature proteins. Envelope glycoproteins are synthesized as an inactive precursor that is N-glycosylated and processed likely by host cell furin or by a furin-like protease in the Golgi to yield the mature SU and TM proteins. The cleavage site between SU and TM requires the minimal sequence [KR]-X-[KR]-R.

It localises to the virion membrane. It is found in the host cell membrane. Functionally, the surface protein (SU) attaches the virus to the host cell by binding to its receptor. This interaction triggers the refolding of the transmembrane protein (TM) and is thought to activate its fusogenic potential by unmasking its fusion peptide. Fusion occurs at the host cell plasma membrane. The transmembrane protein (TM) acts as a class I viral fusion protein. Under the current model, the protein has at least 3 conformational states: pre-fusion native state, pre-hairpin intermediate state, and post-fusion hairpin state. During viral and target cell membrane fusion, the coiled coil regions (heptad repeats) assume a trimer-of-hairpins structure, positioning the fusion peptide in close proximity to the C-terminal region of the ectodomain. The formation of this structure appears to drive apposition and subsequent fusion of viral and target cell membranes. Membranes fusion leads to delivery of the nucleocapsid into the cytoplasm. The chain is Envelope glycoprotein gp150 (env) from Feline immunodeficiency virus (isolate TM2) (FIV).